The sequence spans 737 residues: Phosphoribosylformylglycinamidine synthase subunit PurL (737 aa).

His50 is a catalytic residue. Residues Tyr53 and Lys92 each coordinate ATP. Glu94 is a binding site for Mg(2+). Substrate-binding positions include 95 to 98 and Arg117; that span reads SHNH. Residue His96 is the Proton acceptor of the active site. Residue Asp118 coordinates Mg(2+). Gln241 contacts substrate. Asp269 contacts Mg(2+). 313–315 is a substrate binding site; the sequence is ESQ. Asp494 and Gly531 together coordinate ATP. Asn532 is a Mg(2+) binding site. Ser534 provides a ligand contact to substrate.

This sequence belongs to the FGAMS family. Monomer. Part of the FGAM synthase complex composed of 1 PurL, 1 PurQ and 2 PurS subunits.

Its subcellular location is the cytoplasm. The enzyme catalyses N(2)-formyl-N(1)-(5-phospho-beta-D-ribosyl)glycinamide + L-glutamine + ATP + H2O = 2-formamido-N(1)-(5-O-phospho-beta-D-ribosyl)acetamidine + L-glutamate + ADP + phosphate + H(+). It functions in the pathway purine metabolism; IMP biosynthesis via de novo pathway; 5-amino-1-(5-phospho-D-ribosyl)imidazole from N(2)-formyl-N(1)-(5-phospho-D-ribosyl)glycinamide: step 1/2. Its function is as follows. Part of the phosphoribosylformylglycinamidine synthase complex involved in the purines biosynthetic pathway. Catalyzes the ATP-dependent conversion of formylglycinamide ribonucleotide (FGAR) and glutamine to yield formylglycinamidine ribonucleotide (FGAM) and glutamate. The FGAM synthase complex is composed of three subunits. PurQ produces an ammonia molecule by converting glutamine to glutamate. PurL transfers the ammonia molecule to FGAR to form FGAM in an ATP-dependent manner. PurS interacts with PurQ and PurL and is thought to assist in the transfer of the ammonia molecule from PurQ to PurL. This chain is Phosphoribosylformylglycinamidine synthase subunit PurL, found in Rhodopseudomonas palustris (strain BisA53).